A 665-amino-acid polypeptide reads, in one-letter code: Protein kinase domain-containing protein ppk2 (665 aa).

Disordered stretches follow at residues 42–63 (PNDS…KKKF), 82–152 (GNST…LSRS), 187–217 (LNSQ…SSMN), and 286–343 (AESL…VGHP). Residues 82–104 (GNSTRSPPFHLQNQKSNGQSEVW) show a composition bias toward polar residues. Low complexity-rich tracts occupy residues 137–152 (SLSR…LSRS) and 206–217 (TNRLSSSTSSMN). Positions 294–316 (SATTIQQGDVSSYPLSRSVSTPV) are enriched in polar residues. The residue at position 358 (Ser358) is a Phosphoserine. Residues 388–637 (YTDFTKICQQ…NMLLETSSFL (250 aa)) form the Protein kinase domain. ATP-binding positions include 394–402 (ICQQDTVGT) and Lys417.

The protein localises to the cytoplasm. This chain is Protein kinase domain-containing protein ppk2 (ppk2), found in Schizosaccharomyces pombe (strain 972 / ATCC 24843) (Fission yeast).